The following is a 514-amino-acid chain: Multifunctional alkaline phosphatase superfamily protein pRL90232 (514 aa).

4 residues coordinate Mn(2+): aspartate 12, cysteine 57, aspartate 324, and histidine 325. Cysteine 57 acts as the Nucleophile in catalysis. 3-oxoalanine (Cys) is present on cysteine 57.

This sequence belongs to the alkaline phosphatase superfamily. As to quaternary structure, homotetramer. It depends on Mn(2+) as a cofactor. The conversion to 3-oxoalanine (also known as C-formylglycine, FGly), of a serine or cysteine residue in prokaryotes and of a cysteine residue in eukaryotes, is critical for catalytic activity.

Functionally, hydrolytic enzyme with a broad substrate specificity acting on phosphate diesters and phosphonate monoesters. This Rhizobium johnstonii (strain DSM 114642 / LMG 32736 / 3841) (Rhizobium leguminosarum bv. viciae) protein is Multifunctional alkaline phosphatase superfamily protein pRL90232.